The primary structure comprises 60 residues: Protein translocase subunit SecE (60 aa).

The Cytoplasmic segment spans residues 1–31; it reads MFARLIRYFQEARAELARVTWPTREQVVEGT. The helical transmembrane segment at 32–52 threads the bilayer; it reads QAILLFTLAFMVILGLYDTVF. At 53-60 the chain is on the extracellular side; that stretch reads RFLIGLLR.

It belongs to the SecE/SEC61-gamma family. In terms of assembly, component of the Sec protein translocase complex. Heterotrimer consisting of SecY, SecE and SecG subunits. The heterotrimers can form oligomers, although 1 heterotrimer is thought to be able to translocate proteins. Interacts with SecDF, and other proteins may be involved. The channel interacts with SecA via subunit SecY.

The protein resides in the cell inner membrane. Functionally, essential subunit of the protein translocation channel SecYEG. Clamps together the 2 halves of SecY. May contact the channel plug during translocation. This Thermus thermophilus (strain ATCC 27634 / DSM 579 / HB8) protein is Protein translocase subunit SecE.